Here is a 597-residue protein sequence, read N- to C-terminus: Probable HECT-type ubiquitin ligase-interacting protein creD (597 aa).

2 disordered regions span residues 375–398 (ELDP…GTLS) and 432–499 (LNIT…MATP). A compositionally biased stretch (basic and acidic residues) spans 443 to 455 (TDHESQNDSEHRR). The segment covering 465–481 (PSSGSNSHSPSSPVLSR) has biased composition (low complexity). Residues 482–492 (RPSDEVDHEHV) are compositionally biased toward basic and acidic residues.

The protein belongs to the arrestin family. In terms of assembly, interacts with hulA.

In terms of biological role, component of the regulatory network controlling carbon source utilization through ubiquitination and deubiquitination involving creA, creB, creC, creD and acrB. May be involved in signaling by recognizing appropriately phosphorylated substrates via its arrestin domains and then recruit a HECT-type ubiquitin ligase such as hulA, leading to ubiquitination of the substrate, providing a link between ubiquitination and phosphorylation in protein regulation and stability. The protein is Probable HECT-type ubiquitin ligase-interacting protein creD (creD) of Aspergillus oryzae (strain ATCC 42149 / RIB 40) (Yellow koji mold).